The primary structure comprises 415 residues: uncharacterized protein (415 aa).

Positions 179–199 (SPAPCSPAPGSPPPPAPPAAP) are enriched in pro residues. The disordered stretch occupies residues 179 to 200 (SPAPCSPAPGSPPPPAPPAAPA).

The protein belongs to the herpesviridae BTRF1 family.

This is an uncharacterized protein from Equus caballus (Horse).